The chain runs to 328 residues: Transcription factor bHLH25 (328 aa).

The segment at 125–152 (PHQKSDEFNRKGTKRAQPFSRNQSNAQD) is disordered. In terms of domain architecture, bHLH spans 148–197 (SNAQDHIIAERKRREKLTQRFVALSALVPGLKKMDKASVLGDALKHIKYL).

Homodimer. As to expression, expressed in flowers.

The protein localises to the nucleus. In Arabidopsis thaliana (Mouse-ear cress), this protein is Transcription factor bHLH25 (BHLH25).